A 430-amino-acid chain; its full sequence is Trigger factor (430 aa).

One can recognise a PPIase FKBP-type domain in the interval 157–242 (GDLVALETWS…AVEVSEPVLP (86 aa)).

It belongs to the FKBP-type PPIase family. Tig subfamily.

It is found in the cytoplasm. The enzyme catalyses [protein]-peptidylproline (omega=180) = [protein]-peptidylproline (omega=0). Its function is as follows. Involved in protein export. Acts as a chaperone by maintaining the newly synthesized protein in an open conformation. Functions as a peptidyl-prolyl cis-trans isomerase. This chain is Trigger factor, found in Xanthomonas oryzae pv. oryzae (strain MAFF 311018).